The following is a 745-amino-acid chain: Probable endochitinase ARB_07371 (745 aa).

The N-terminal stretch at 1–23 (MALPKTIMAFIAFISFLVSTTFA) is a signal peptide. One can recognise a GH18 domain in the interval 30-351 (TNVVTYWGQG…SNIKRLLLNN (322 aa)). The active-site Proton donor is the E178. 2 disordered regions span residues 351–372 (NDPS…SMST) and 395–446 (WSMP…TTEI). The segment covering 357-372 (TTTSKTMSSTKTSMST) has biased composition (low complexity). Residues N438 and N484 are each glycosylated (N-linked (GlcNAc...) asparagine). Positions 651–715 (SEPMTPTQVP…EMGGNGGDRT (65 aa)) are disordered. A lipid anchor (GPI-anchor amidated glycine) is attached at G720. Residues 721–745 (GAGVVSPSFSVVVIVLGSIVYHIMQ) constitute a propeptide, removed in mature form.

This sequence belongs to the glycosyl hydrolase 18 family. Chitinase class III subfamily.

Its subcellular location is the cell membrane. It localises to the secreted. The protein resides in the cell wall. It carries out the reaction Random endo-hydrolysis of N-acetyl-beta-D-glucosaminide (1-&gt;4)-beta-linkages in chitin and chitodextrins.. In terms of biological role, GPI-anchored chitinase involved in the degradation of chitin, a component of the cell walls of fungi and exoskeletal elements of some animals (including worms and arthropods). Required to reshape the cell wall at the sites where cell wall remodeling and/or cell wall maturation actively take place such as sites of conidia formation. The chain is Probable endochitinase ARB_07371 from Arthroderma benhamiae (strain ATCC MYA-4681 / CBS 112371) (Trichophyton mentagrophytes).